Here is an 88-residue protein sequence, read N- to C-terminus: Protein U62 (88 aa).

The protein is Protein U62 of Elephantid herpesvirus 1 (isolate Asian elephant/Berlin/Kiba/1998) (EIHV-1).